A 429-amino-acid chain; its full sequence is Bifunctional protein GlmU (429 aa).

Positions 1–223 (MKISVLILAA…EQDFMGVNDK (223 aa)) are pyrophosphorylase. UDP-N-acetyl-alpha-D-glucosamine contacts are provided by residues 8 to 11 (LAAG), Lys-22, Gln-74, and 81 to 82 (GT). A Mg(2+)-binding site is contributed by Asp-102. UDP-N-acetyl-alpha-D-glucosamine-binding residues include Gly-135, Glu-149, Asn-164, and Asn-221. Mg(2+) is bound at residue Asn-221. The interval 224 to 244 (IELCLAQDLMQEAIKKEWMKQ) is linker. Positions 245 to 429 (GVIFHMPATT…KDYFYTKFKK (185 aa)) are N-acetyltransferase. UDP-N-acetyl-alpha-D-glucosamine contacts are provided by Arg-308 and Lys-325. The Proton acceptor role is filled by His-336. Residues Tyr-339 and Asn-350 each coordinate UDP-N-acetyl-alpha-D-glucosamine. Residues 359–360 (NY), Ser-378, Ala-396, and Arg-413 contribute to the acetyl-CoA site.

It in the N-terminal section; belongs to the N-acetylglucosamine-1-phosphate uridyltransferase family. This sequence in the C-terminal section; belongs to the transferase hexapeptide repeat family. Homotrimer. Mg(2+) serves as cofactor.

It is found in the cytoplasm. It carries out the reaction alpha-D-glucosamine 1-phosphate + acetyl-CoA = N-acetyl-alpha-D-glucosamine 1-phosphate + CoA + H(+). The enzyme catalyses N-acetyl-alpha-D-glucosamine 1-phosphate + UTP + H(+) = UDP-N-acetyl-alpha-D-glucosamine + diphosphate. It functions in the pathway nucleotide-sugar biosynthesis; UDP-N-acetyl-alpha-D-glucosamine biosynthesis; N-acetyl-alpha-D-glucosamine 1-phosphate from alpha-D-glucosamine 6-phosphate (route II): step 2/2. It participates in nucleotide-sugar biosynthesis; UDP-N-acetyl-alpha-D-glucosamine biosynthesis; UDP-N-acetyl-alpha-D-glucosamine from N-acetyl-alpha-D-glucosamine 1-phosphate: step 1/1. Its pathway is bacterial outer membrane biogenesis; LPS lipid A biosynthesis. Its function is as follows. Catalyzes the last two sequential reactions in the de novo biosynthetic pathway for UDP-N-acetylglucosamine (UDP-GlcNAc). The C-terminal domain catalyzes the transfer of acetyl group from acetyl coenzyme A to glucosamine-1-phosphate (GlcN-1-P) to produce N-acetylglucosamine-1-phosphate (GlcNAc-1-P), which is converted into UDP-GlcNAc by the transfer of uridine 5-monophosphate (from uridine 5-triphosphate), a reaction catalyzed by the N-terminal domain. In Campylobacter lari (strain RM2100 / D67 / ATCC BAA-1060), this protein is Bifunctional protein GlmU.